A 120-amino-acid polypeptide reads, in one-letter code: NAD(P)H-quinone oxidoreductase subunit 3 (120 aa).

The next 3 membrane-spanning stretches (helical) occupy residues 1 to 21, 64 to 84, and 89 to 109; these read MFVLSGYEYLLGFFIICSLVP, MFALVFVVFDVETVFLYPWAV, and LGLLAFIEALVFIAILVVALV.

The protein belongs to the complex I subunit 3 family. NDH-1 can be composed of about 15 different subunits; different subcomplexes with different compositions have been identified which probably have different functions.

The protein resides in the cellular thylakoid membrane. It carries out the reaction a plastoquinone + NADH + (n+1) H(+)(in) = a plastoquinol + NAD(+) + n H(+)(out). It catalyses the reaction a plastoquinone + NADPH + (n+1) H(+)(in) = a plastoquinol + NADP(+) + n H(+)(out). Functionally, NDH-1 shuttles electrons from an unknown electron donor, via FMN and iron-sulfur (Fe-S) centers, to quinones in the respiratory and/or the photosynthetic chain. The immediate electron acceptor for the enzyme in this species is believed to be plastoquinone. Couples the redox reaction to proton translocation, and thus conserves the redox energy in a proton gradient. Cyanobacterial NDH-1 also plays a role in inorganic carbon-concentration. The sequence is that of NAD(P)H-quinone oxidoreductase subunit 3 from Nostoc punctiforme (strain ATCC 29133 / PCC 73102).